A 94-amino-acid polypeptide reads, in one-letter code: MPTSETSWWPGACLCSSCAWTSDSRFFNLWTLGLAPAASQGFSGLKPQTDDCTVSFPGFEAFGLGLSHYWHLSFPACRQSIMGLCLVIVLANSS.

Specifically expressed in retina and retinal pigment epithelium.

This is an uncharacterized protein from Homo sapiens (Human).